Reading from the N-terminus, the 540-residue chain is MTLNSLPVWPALQAHYEEIRDAHLRDWFAPANDRAPTRAERFTFEGGGLAADFSKNRLTDATLALLVRLAREAGVEARRDAMFAGETVNPTEGRAALHTALRANAPDAPFQAQVAAERAKMARFADAVRSGAWTGYTGKRIRHVVNIGIGGSDLGPKMVVHALHHVATPDIATHFVSNVDGADLARVLERIDPEATLAIIVSKTFTTLETMTNARSLRDWFVANGCPEGALAKHFVGVSANPAEVVKFGIAEANVFEMWDWVGGRYSLWSAVGLSIMIAIGPERFDELLAGARDMDEHFRTAPLERNLPVLQGLVGIWYRNFFGAQSYLVAPYSEALHYLPSYLQQLEMESNGKSARIDGAFVDYPTSAVTWGEPGTNGQHAFFQMLHQGPTLVPIDFIAVLTPEHPLASHHPKLLANCFAQSEALMLGRTLDEARKIAGPAKPELAPHLTFPGNRPTTTLLVDALTPRTLGALIALYEHKVLVQAAVWNINPFDQWGVELGKILGKVVEADLTAAQVDPAKHDSSTSALIARARKALGE.

Catalysis depends on Glu350, which acts as the Proton donor. Residues His381 and Lys503 contribute to the active site.

It belongs to the GPI family.

It localises to the cytoplasm. It carries out the reaction alpha-D-glucose 6-phosphate = beta-D-fructose 6-phosphate. Its pathway is carbohydrate biosynthesis; gluconeogenesis. The protein operates within carbohydrate degradation; glycolysis; D-glyceraldehyde 3-phosphate and glycerone phosphate from D-glucose: step 2/4. Functionally, catalyzes the reversible isomerization of glucose-6-phosphate to fructose-6-phosphate. This is Glucose-6-phosphate isomerase from Burkholderia pseudomallei (strain 1106a).